Here is a 907-residue protein sequence, read N- to C-terminus: Probable dipeptidyl-aminopeptidase B (907 aa).

Basic and acidic residues predominate over residues 1–11; it reads MYDQVPYRDTD. A disordered region spans residues 1–71; the sequence is MYDQVPYRDT…RGKPDEDDDL (71 aa). Over 1–88 the chain is Cytoplasmic; the sequence is MYDQVPYRDT…LKPMERKVRR (88 aa). Positions 22–36 are enriched in low complexity; the sequence is SDSNRSSIDTTSTTS. Residues 89-109 traverse the membrane as a helical; Signal-anchor for type II membrane protein segment; sequence AMYLLAFLMIGGWFLALAVYV. The Vacuolar segment spans residues 110–907; it reads SREHFGTPDT…PLRKRNRELV (798 aa). N-linked (GlcNAc...) asparagine glycans are attached at residues N185 and N341. S746 functions as the Charge relay system in the catalytic mechanism. An N-linked (GlcNAc...) asparagine glycan is attached at N800. Residues D823 and H856 each act as charge relay system in the active site.

Belongs to the peptidase S9B family.

It localises to the vacuole membrane. The enzyme catalyses Release of an N-terminal dipeptide, Xaa-Yaa-|-Zaa-, from a polypeptide, preferentially when Yaa is Pro, provided Zaa is neither Pro nor hydroxyproline.. Type IV dipeptidyl-peptidase which removes N-terminal dipeptides sequentially from polypeptides having unsubstituted N-termini provided that the penultimate residue is proline. The chain is Probable dipeptidyl-aminopeptidase B (DAPB) from Tuber melanosporum (strain Mel28) (Perigord black truffle).